We begin with the raw amino-acid sequence, 429 residues long: Glutamate-1-semialdehyde 2,1-aminomutase (429 aa).

At K265 the chain carries N6-(pyridoxal phosphate)lysine.

The protein belongs to the class-III pyridoxal-phosphate-dependent aminotransferase family. HemL subfamily. As to quaternary structure, homodimer. It depends on pyridoxal 5'-phosphate as a cofactor.

The protein localises to the cytoplasm. It catalyses the reaction (S)-4-amino-5-oxopentanoate = 5-aminolevulinate. It functions in the pathway porphyrin-containing compound metabolism; protoporphyrin-IX biosynthesis; 5-aminolevulinate from L-glutamyl-tRNA(Glu): step 2/2. The polypeptide is Glutamate-1-semialdehyde 2,1-aminomutase (Legionella pneumophila subsp. pneumophila (strain Philadelphia 1 / ATCC 33152 / DSM 7513)).